The chain runs to 191 residues: Peptidyl-tRNA hydrolase (191 aa).

Tyr-14 provides a ligand contact to tRNA. His-19 functions as the Proton acceptor in the catalytic mechanism. TRNA is bound by residues Tyr-65, Asn-67, and Asn-113.

The protein belongs to the PTH family. In terms of assembly, monomer.

Its subcellular location is the cytoplasm. It carries out the reaction an N-acyl-L-alpha-aminoacyl-tRNA + H2O = an N-acyl-L-amino acid + a tRNA + H(+). Hydrolyzes ribosome-free peptidyl-tRNAs (with 1 or more amino acids incorporated), which drop off the ribosome during protein synthesis, or as a result of ribosome stalling. Functionally, catalyzes the release of premature peptidyl moieties from peptidyl-tRNA molecules trapped in stalled 50S ribosomal subunits, and thus maintains levels of free tRNAs and 50S ribosomes. The sequence is that of Peptidyl-tRNA hydrolase from Nitrosospira multiformis (strain ATCC 25196 / NCIMB 11849 / C 71).